Reading from the N-terminus, the 331-residue chain is Phosphatidylinositol transfer protein 4 (331 aa).

This sequence belongs to the PtdIns transfer protein family. PI transfer class IIA subfamily.

Functionally, catalyzes the transfer of PtdIns and phosphatidylcholine between membranes. The sequence is that of Phosphatidylinositol transfer protein 4 (pitD) from Dictyostelium discoideum (Social amoeba).